The primary structure comprises 1188 residues: Adenomatous polyposis coli protein-related protein 1 (1188 aa).

The disordered stretch occupies residues 1–50 (MSSSSSDENETTIHRTGSNTGGSGIYSQPRAGSSKRTSNVRHDVSDVDDE). The segment at 1–486 (MSSSSSDENE…LSLRATRASP (486 aa)) is required for interaction with bar-1 and hmp-2. The stretch at 314–358 (NCLKVLASLLSPDARFTSLVDSATGILKYVSQYLANTSTHLELRS) is one ARM repeat. A compositionally biased stretch (low complexity) spans 579–588 (IQQQQQMQKA). 6 disordered regions span residues 579–624 (IQQQ…SMNP), 670–702 (TESE…DGAT), 726–751 (TPNG…GPSL), 778–952 (QSEM…TMRF), 1003–1092 (CSMI…LKDK), and 1157–1181 (YQKP…PNPK). Residues 600 to 1188 (DLDIPTSTVM…NPKQMLVTIV (589 aa)) are required for interaction with pry-1. Composition is skewed to polar residues over residues 604–624 (PTST…SMNP) and 677–701 (LTSQ…SDGA). Polar residues-rich tracts occupy residues 778-788 (QSEMPTSSSTP) and 800-811 (FSPTQKTTSSPA). Basic and acidic residues-rich tracts occupy residues 832–843 (RRQDASDADRLL) and 871–900 (EPER…DHNG). 4 stretches are compositionally biased toward polar residues: residues 909–929 (WSPQ…SSED), 937–946 (EPNSSTSGAA), 1014–1039 (QRNE…SASS), and 1164–1180 (GRNN…TPNP).

It belongs to the adenomatous polyposis coli (APC) family. As to quaternary structure, interacts (via N-terminus) with bar-1 and hmp-2; the interaction with hmp-2 is relatively weak. Interacts (via C-terminus) with pry-1 (via N-terminus). Probably associates with bar-1, gsk-3, pry-1 in a complex. In terms of tissue distribution, during the L1 stage, expressed in vulval precursor cells (P3-8.p), seam cells and excretory cells.

Its subcellular location is the cell junction. The protein localises to the adherens junction. The protein resides in the cytoplasm. It localises to the nucleus. In terms of biological role, has a role in endoderm cell specification and pharyngeal development. Required for the migration of epithelial cells, organization of the anterior seam cells and ceh-13 expression during embryo morphogenesis. Prevents hyperactivation of the Wnt signaling pathway during endoderm development, probably by preventing hmp-2 nuclear translocation. During larval development, apr-1 is required for expression of lin-39 in P3-8.p. Shown to negatively regulate Wnt signaling in vulval precursor cells. Has a role in cell division by establishing the polarity of the mother cell which forms the asymmetries of the daughter nuclei. During the L4 larval stage, it is required for the asymmetric division and self-renewal of seam cells. Thought to regulate export of wrm-1 from the nucleus possibly as part of a complex involving pry-1. This Caenorhabditis elegans protein is Adenomatous polyposis coli protein-related protein 1.